The chain runs to 328 residues: Malate dehydrogenase (328 aa).

11–17 (GAAGQIG) serves as a coordination point for NAD(+). Residues Arg94 and Arg100 each coordinate substrate. NAD(+) is bound by residues Asn107, Gln114, and 131–133 (VGN). Substrate contacts are provided by Asn133 and Arg164. His189 serves as the catalytic Proton acceptor.

It belongs to the LDH/MDH superfamily. MDH type 2 family.

The catalysed reaction is (S)-malate + NAD(+) = oxaloacetate + NADH + H(+). Its function is as follows. Catalyzes the reversible oxidation of malate to oxaloacetate. In Xylella fastidiosa (strain Temecula1 / ATCC 700964), this protein is Malate dehydrogenase.